The primary structure comprises 494 residues: Endoglucanase 1 (494 aa).

A signal peptide spans 1–25; the sequence is MDCSSPLSLFHLLLVCTVMVKCCSA. The active-site Nucleophile is Asp-82. Asn-254 and Asn-359 each carry an N-linked (GlcNAc...) asparagine glycan. Catalysis depends on residues His-411, Asp-462, and Glu-471.

Belongs to the glycosyl hydrolase 9 (cellulase E) family.

The catalysed reaction is Endohydrolysis of (1-&gt;4)-beta-D-glucosidic linkages in cellulose, lichenin and cereal beta-D-glucans.. Its function is as follows. Involved in ripening fruit process. This chain is Endoglucanase 1 (CEL1), found in Persea americana (Avocado).